The sequence spans 175 residues: Photosynthetic NDH subunit of subcomplex B 4, chloroplastic (175 aa).

A chloroplast-targeting transit peptide spans 1–24; the sequence is MAEAFTSFTFTNLHIPSSYNHSPK. A helical transmembrane segment spans residues 95 to 111; the sequence is VYMFYIMFTCWGCLYFG.

In terms of assembly, part of the chloroplast NDH complex, composed of a mixture of chloroplast and nucleus encoded subunits. Component of the NDH subcomplex B, at least composed of PnsB1, PnsB2, PnsB3, PnsB4 and PnsB5.

The protein localises to the plastid. Its subcellular location is the chloroplast thylakoid membrane. Its function is as follows. NDH shuttles electrons from NAD(P)H:plastoquinone, via FMN and iron-sulfur (Fe-S) centers, to quinones in the photosynthetic chain and possibly in a chloroplast respiratory chain. The immediate electron acceptor for the enzyme in this species is believed to be plastoquinone. Couples the redox reaction to proton translocation, and thus conserves the redox energy in a proton gradient. This is Photosynthetic NDH subunit of subcomplex B 4, chloroplastic from Arabidopsis thaliana (Mouse-ear cress).